Reading from the N-terminus, the 931-residue chain is Mitochondrial cox1 translation regulator ppr4 (931 aa).

A mitochondrion-targeting transit peptide spans 1 to 16 (MSKSFAYRHIWCFWRF). PPR repeat units lie at residues 247-277 (NEVLYTQYLGFLTKRGDYQIAIYMFDEMYRT), 282-316 (SFTACRLMIESLVRQNKFEEAISLYKKIIAKRPKI), 429-461 (HLLNCFLNSSTVSLDVSMVLELLRDLKKKKIKV), 462-496 (DERTLVICITIFSRRKDLFAMEKIHQYFSDQGIKT), 497-531 (SNQAYAALLDAYIEAEDTEKIELYLGKIRRLGITE), 598-632 (NVVHYSIAATVLGNLNQLDQLLLLEKRMESEGKAP), and 683-713 (PPSLFSSLIKEYTSLGDIKEAKQVLSTYLEY).

Component of the MRH5C complex, composed of mrh5, ppr4, mtf2, and sls1. Proteins mtf2 and sls1 form a subcomplex that serves as a scaffold to bring mrh5 and ppr4 together. The MRH5C complex associates with the small subunit of the mitochondrial ribosome.

The protein localises to the mitochondrion. In terms of biological role, RNA-binding translation activation factor that as part of the MRH5C complex specifically recruits cox1 mRNA to the mitochondrial ribosome for translation initiation. The chain is Mitochondrial cox1 translation regulator ppr4 from Schizosaccharomyces pombe (strain 972 / ATCC 24843) (Fission yeast).